Reading from the N-terminus, the 759-residue chain is Phosphoribosylformylglycinamidine synthase subunit PurL (759 aa).

H61 is a catalytic residue. 2 residues coordinate ATP: Y64 and K105. Residue E107 coordinates Mg(2+). Substrate is bound by residues S108–H111 and R130. H109 (proton acceptor) is an active-site residue. Residue D131 coordinates Mg(2+). Q260 contacts substrate. D288 lines the Mg(2+) pocket. Residue E332–Q334 participates in substrate binding. Residues D520 and G557 each contribute to the ATP site. Position 558 (N558) interacts with Mg(2+). Substrate is bound at residue S560.

Belongs to the FGAMS family. As to quaternary structure, monomer. Part of the FGAM synthase complex composed of 1 PurL, 1 PurQ and 2 PurS subunits.

It localises to the cytoplasm. It catalyses the reaction N(2)-formyl-N(1)-(5-phospho-beta-D-ribosyl)glycinamide + L-glutamine + ATP + H2O = 2-formamido-N(1)-(5-O-phospho-beta-D-ribosyl)acetamidine + L-glutamate + ADP + phosphate + H(+). It participates in purine metabolism; IMP biosynthesis via de novo pathway; 5-amino-1-(5-phospho-D-ribosyl)imidazole from N(2)-formyl-N(1)-(5-phospho-D-ribosyl)glycinamide: step 1/2. Its function is as follows. Part of the phosphoribosylformylglycinamidine synthase complex involved in the purines biosynthetic pathway. Catalyzes the ATP-dependent conversion of formylglycinamide ribonucleotide (FGAR) and glutamine to yield formylglycinamidine ribonucleotide (FGAM) and glutamate. The FGAM synthase complex is composed of three subunits. PurQ produces an ammonia molecule by converting glutamine to glutamate. PurL transfers the ammonia molecule to FGAR to form FGAM in an ATP-dependent manner. PurS interacts with PurQ and PurL and is thought to assist in the transfer of the ammonia molecule from PurQ to PurL. In Thermoplasma volcanium (strain ATCC 51530 / DSM 4299 / JCM 9571 / NBRC 15438 / GSS1), this protein is Phosphoribosylformylglycinamidine synthase subunit PurL.